The sequence spans 504 residues: Taurochenodeoxycholic 6 alpha-hydroxylase (504 aa).

A run of 2 helical transmembrane segments spans residues 6-26 (LASV…LLLL) and 110-130 (APVL…LLNG). Cys451 is a binding site for heme.

This sequence belongs to the cytochrome P450 family. Requires heme as cofactor. Primarily expressed in liver. Low expression in kidney.

It is found in the endoplasmic reticulum membrane. The catalysed reaction is taurochenodeoxycholate + reduced [NADPH--hemoprotein reductase] + O2 = taurohyocholate + oxidized [NADPH--hemoprotein reductase] + H2O + H(+). It carries out the reaction lithocholate + reduced [NADPH--hemoprotein reductase] + O2 = hyodeoxycholate + oxidized [NADPH--hemoprotein reductase] + H2O + H(+). Functionally, catalyzes the 6 alpha hydroxylation oxidation of taurodeoxycholate to produce the pig specific bile acid taurohyocholic acid. The polypeptide is Taurochenodeoxycholic 6 alpha-hydroxylase (CYP4A21) (Sus scrofa (Pig)).